The primary structure comprises 403 residues: Zinc finger CCHC domain-containing protein 3 (403 aa).

The segment at 1 to 158 (MATGGGAEEE…PLQDEPAAAA (158 aa)) is disordered. Composition is skewed to basic and acidic residues over residues 26 to 38 (ARGE…REKM) and 47 to 65 (LAEK…REEE). Residues 67 to 79 (GGGGGSAGLGGPA) show a composition bias toward gly residues. A compositionally biased stretch (basic and acidic residues) spans 95-121 (GDPKGRRRDPAGEAVDPRKKKGAAEAG). Over residues 128–139 (AAAAAMATPARP) the composition is skewed to low complexity. Position 201 is a phosphotyrosine (Tyr-201). 3 consecutive CCHC-type zinc fingers follow at residues 335–350 (CFKC…SCTQ), 352–368 (RCFR…YCRK), and 372–387 (CNLC…QCPK).

As to quaternary structure, interacts with CGAS. Interacts with RIGI. Interacts with IFIH1/MDA5.

The protein resides in the cytoplasm. Nucleic acid-binding protein involved in innate immune response to DNA and RNA viruses. Binds DNA and RNA in the cytoplasm and acts by promoting recognition of viral nucleic acids by virus sensors, such as RIGI, IFIH1/MDA5 and CGAS. Acts as a co-sensor for recognition of double-stranded DNA (dsDNA) by cGAS in the cytoplasm, thereby playing a role in innate immune response to cytosolic dsDNA and DNA virus. Binds dsDNA and probably acts by promoting sensing of dsDNA by CGAS, leading to enhance CGAS oligomerization and activation. Promotes sensing of viral RNA by RIGI-like receptors proteins RIGI and IFIH1/MDA5 via two mechanisms: binds double-stranded RNA (dsRNA), enhancing the binding of RIGI and IFIH1/MDA5 to dsRNA and promotes 'Lys-63'-linked ubiquitination and subsequent activation of RIGI and IFIH1/MDA5. The sequence is that of Zinc finger CCHC domain-containing protein 3 from Homo sapiens (Human).